A 968-amino-acid polypeptide reads, in one-letter code: RNA polymerase-associated protein RapA (968 aa).

Positions 163–332 constitute a Helicase ATP-binding domain; sequence EVGRRYAPRV…FARLRLLDPD (170 aa). ATP is bound at residue 176-183; the sequence is DEVGLGKT. A DEAH box motif is present at residues 278 to 281; that stretch reads DEAH. The Helicase C-terminal domain occupies 491–655; sequence RVDWLIEFLK…EFAEDLLNVL (165 aa).

The protein belongs to the SNF2/RAD54 helicase family. RapA subfamily. As to quaternary structure, interacts with the RNAP. Has a higher affinity for the core RNAP than for the holoenzyme. Its ATPase activity is stimulated by binding to RNAP.

Its function is as follows. Transcription regulator that activates transcription by stimulating RNA polymerase (RNAP) recycling in case of stress conditions such as supercoiled DNA or high salt concentrations. Probably acts by releasing the RNAP, when it is trapped or immobilized on tightly supercoiled DNA. Does not activate transcription on linear DNA. Probably not involved in DNA repair. This chain is RNA polymerase-associated protein RapA, found in Shewanella baltica (strain OS155 / ATCC BAA-1091).